The primary structure comprises 247 residues: Caffeoyl-CoA O-methyltransferase (247 aa).

Lysine 21 serves as a coordination point for substrate. Residues threonine 63, glutamate 85, 87-88 (GV), serine 93, aspartate 111, and alanine 140 each bind S-adenosyl-L-methionine. Aspartate 163 contacts substrate. Aspartate 163 is an a divalent metal cation binding site. Residue aspartate 165 participates in S-adenosyl-L-methionine binding. 2 residues coordinate a divalent metal cation: aspartate 189 and asparagine 190. Asparagine 194 provides a ligand contact to substrate.

Belongs to the class I-like SAM-binding methyltransferase superfamily. Cation-dependent O-methyltransferase family. CCoAMT subfamily. A divalent metal cation is required as a cofactor.

It carries out the reaction (E)-caffeoyl-CoA + S-adenosyl-L-methionine = (E)-feruloyl-CoA + S-adenosyl-L-homocysteine + H(+). Its pathway is aromatic compound metabolism; phenylpropanoid biosynthesis. In terms of biological role, methylates caffeoyl-CoA to feruloyl-CoA and 5-hydroxyferuloyl-CoA to sinapoyl-CoA. Plays a role in the synthesis of feruloylated polysaccharides. Involved in the reinforcement of the plant cell wall. Also involved in the responding to wounding or pathogen challenge by the increased formation of cell wall-bound ferulic acid polymers. The chain is Caffeoyl-CoA O-methyltransferase from Populus tremuloides (Quaking aspen).